Consider the following 890-residue polypeptide: DNA mismatch repair protein MutS (890 aa).

645 to 652 (GPNMAGKS) provides a ligand contact to ATP.

Belongs to the DNA mismatch repair MutS family.

Functionally, this protein is involved in the repair of mismatches in DNA. It is possible that it carries out the mismatch recognition step. This protein has a weak ATPase activity. This Rickettsia africae (strain ESF-5) protein is DNA mismatch repair protein MutS.